Here is a 590-residue protein sequence, read N- to C-terminus: Negative elongation factor D (590 aa).

Residues tyrosine 15–valine 43 form a disordered region. Residues tryptophan 21 to valine 43 show a composition bias toward acidic residues.

The protein belongs to the NELF-D family. The NELF complex is composed of NELFA, NELFB, NELFCD and NELFE; NELFA and NELFCD form a stable subcomplex that binds primarily through NELFCD to the N-terminus of NELFB. Binds RNA which may help to stabilize the NELF complex on nucleic acid. In vitro, the NELFA:NELFCD subcomplex binds to ssDNA and ssRNA in a sequence- and structure-dependent manner. Interacts with ARAF1. Interacts with PCF11. Interacts with NELFB. Interacts with KAT8.

The protein localises to the nucleus. Functionally, essential component of the NELF complex, a complex that negatively regulates the elongation of transcription by RNA polymerase II. The NELF complex, which acts via an association with the DSIF complex and causes transcriptional pausing, is counteracted by the P-TEFb kinase complex. This chain is Negative elongation factor D (NELFCD), found in Pongo abelii (Sumatran orangutan).